Consider the following 95-residue polypeptide: Beta-alanine degradation protein BauB (95 aa).

The Cupin type-2 domain occupies 23-90 (WRFAPGAETG…NASAHEVVFV (68 aa)).

In terms of biological role, involved in the degradation of beta-alanine. This Pseudomonas aeruginosa (strain ATCC 15692 / DSM 22644 / CIP 104116 / JCM 14847 / LMG 12228 / 1C / PRS 101 / PAO1) protein is Beta-alanine degradation protein BauB (bauB).